The following is a 49-amino-acid chain: Chitin-binding lectin (49 aa).

One can recognise a Chitin-binding type-1 domain in the interval 2–45 (DHRCGREATPPGKLCNDGRCCSQWGWCGTTQAYCSGKCQSQCDC). 4 disulfide bridges follow: Cys-5–Cys-22, Cys-16–Cys-28, Cys-21–Cys-35, and Cys-39–Cys-43.

Homodimer; disulfide-linked.

In terms of biological role, chitin-binding lectin which is specific for N-acetylglucosamine oligomers. This is Chitin-binding lectin from Viscum album (European mistletoe).